We begin with the raw amino-acid sequence, 91 residues long: Small ribosomal subunit protein bS18 (91 aa).

The protein belongs to the bacterial ribosomal protein bS18 family. Part of the 30S ribosomal subunit. Forms a tight heterodimer with protein bS6.

Functionally, binds as a heterodimer with protein bS6 to the central domain of the 16S rRNA, where it helps stabilize the platform of the 30S subunit. This Burkholderia lata (strain ATCC 17760 / DSM 23089 / LMG 22485 / NCIMB 9086 / R18194 / 383) protein is Small ribosomal subunit protein bS18.